We begin with the raw amino-acid sequence, 366 residues long: GTPase Obg (366 aa).

Positions 1–159 (MKFLDEAKVY…KTIWLRLKLI (159 aa)) constitute an Obg domain. Residues 160–327 (ADAGLVGLPN…VLRALRDVIV (168 aa)) enclose the OBG-type G domain. Residues 166-173 (GLPNAGKS), 191-195 (FTTLH), 212-215 (DIPG), 279-282 (SQID), and 308-310 (SAI) each bind GTP. 2 residues coordinate Mg(2+): S173 and T193. The tract at residues 333–366 (DDETISQRPKKHRHKLEDRPQHENGPEESEEGEE) is disordered. Basic and acidic residues predominate over residues 347-357 (KLEDRPQHENG).

It belongs to the TRAFAC class OBG-HflX-like GTPase superfamily. OBG GTPase family. As to quaternary structure, monomer. It depends on Mg(2+) as a cofactor.

It localises to the cytoplasm. An essential GTPase which binds GTP, GDP and possibly (p)ppGpp with moderate affinity, with high nucleotide exchange rates and a fairly low GTP hydrolysis rate. Plays a role in control of the cell cycle, stress response, ribosome biogenesis and in those bacteria that undergo differentiation, in morphogenesis control. The polypeptide is GTPase Obg (Allorhizobium ampelinum (strain ATCC BAA-846 / DSM 112012 / S4) (Agrobacterium vitis (strain S4))).